A 281-amino-acid polypeptide reads, in one-letter code: UPF0294 protein VC_2238 (281 aa).

Belongs to the UPF0294 family.

Its subcellular location is the cytoplasm. This Vibrio cholerae serotype O1 (strain ATCC 39315 / El Tor Inaba N16961) protein is UPF0294 protein VC_2238.